We begin with the raw amino-acid sequence, 182 residues long: MALSREEIASRYSKALFAYAQDANSLDAVHEDMNVLLQVAKENPDMLRLLSDPIIRKNQKEEFLSSFSDKFSSETKNFLDFLLEYRRFESLTAIIEAFNTLYDEYKNIASGTAVSAIKLNEDELSRISQAYAKKYGFKELILTNKVDPSILGGIILKVGDRIIDGSIRTRLQQIREQLIENR.

It belongs to the ATPase delta chain family. As to quaternary structure, F-type ATPases have 2 components, F(1) - the catalytic core - and F(0) - the membrane proton channel. F(1) has five subunits: alpha(3), beta(3), gamma(1), delta(1), epsilon(1). F(0) has three main subunits: a(1), b(2) and c(10-14). The alpha and beta chains form an alternating ring which encloses part of the gamma chain. F(1) is attached to F(0) by a central stalk formed by the gamma and epsilon chains, while a peripheral stalk is formed by the delta and b chains.

The protein localises to the cell membrane. In terms of biological role, f(1)F(0) ATP synthase produces ATP from ADP in the presence of a proton or sodium gradient. F-type ATPases consist of two structural domains, F(1) containing the extramembraneous catalytic core and F(0) containing the membrane proton channel, linked together by a central stalk and a peripheral stalk. During catalysis, ATP synthesis in the catalytic domain of F(1) is coupled via a rotary mechanism of the central stalk subunits to proton translocation. This protein is part of the stalk that links CF(0) to CF(1). It either transmits conformational changes from CF(0) to CF(1) or is implicated in proton conduction. The protein is ATP synthase subunit delta of Lactobacillus johnsonii (strain CNCM I-12250 / La1 / NCC 533).